The following is a 2988-amino-acid chain: NBPF family member NBPF14 (2988 aa).

The stretch at 75–119 (RQFKEEKLAEQLKQAEELRQYKVLVHSQERELTQLREKLREGRDA) forms a coiled coil. Disordered regions lie at residues 161-200 (KLSPENDEDEDEDVQVEEAEKVLESSAPREVQKAEESKVP), 451-474 (EKVQKSSAPREMQKAEEKEVPEDS), and 520-566 (WEDA…EGYS). The span at 165 to 177 (ENDEDEDEDVQVE) shows a compositional bias: acidic residues. Olduvai domains follow at residues 165–259 (ENDE…NILP), 436–528 (ENDN…HIIP), 529–600 (ENES…VDIG), 601–692 (RHRW…PSCP), 695–750 (SREL…LDVD), 751–843 (RIKK…RSKK), 844–919 (ERRR…LDVD), 920–1012 (RIKK…RSKK), 1013–1105 (ERRR…PSCP), 1108–1163 (SREL…LDVD), 1164–1256 (RIKK…RSKK), 1257–1349 (ERRR…PSCP), 1352–1407 (SREL…LDVD), 1408–1500 (RIKK…RSKK), 1501–1593 (ERRR…PSCP), 1596–1651 (SREL…LDVD), 1652–1744 (RFKK…RSKK), 1745–1837 (ERRR…PSCP), 1840–1895 (SREL…LDVD), 1896–1988 (RIKK…RSKK), 1989–2081 (ERRR…PSCP), 2084–2139 (SREL…LDVD), 2140–2232 (RIKK…RSKK), 2233–2325 (ERRR…PSCP), 2328–2383 (SREL…LDVD), 2384–2476 (RIKK…RSKK), 2477–2569 (ERRR…PSCP), 2572–2627 (SREL…LDVD), 2628–2720 (RIKK…RSKK), 2721–2813 (ERRR…PSCP), 2816–2889 (SREL…RSKK), and 2890–2988 (ERRR…IFPQ). Residues 190–200 (EVQKAEESKVP) show a composition bias toward basic and acidic residues. Acidic residues-rich tracts occupy residues 530-539 (NESDDEEEEE) and 550-562 (ESEEEEVPQESWD). Disordered regions lie at residues 754–773 (KDEEEEEDQDPPCPRLSREL), 828–871 (EKKG…LDEK), and 999–1038 (KGKGKKRRGRRSKKERRRGRKEGEEDQNPPCPRLSRELLD). Composition is skewed to basic residues over residues 831 to 849 (GKGKKRRGRRSKKERRRGR) and 1000 to 1018 (GKGKKRRGRRSKKERRRGR). A disordered region spans residues 1243 to 1282 (KGKGKKRRGRRSKKERRRGRKEGEEDQNPPCPRLSRELLD). A compositionally biased stretch (basic residues) spans 1244-1262 (GKGKKRRGRRSKKERRRGR). A disordered region spans residues 1487–1521 (KGKGKKRRGRRSKKERRRGRKEGEEDQNPPCPRLS). Residues 1488-1506 (GKGKKRRGRRSKKERRRGR) are compositionally biased toward basic residues. The tract at residues 1731 to 1770 (KGKGKKRRGRRSKKERRRGRKEGEEDQNPPCPRLSRELLD) is disordered. The segment covering 1732 to 1750 (GKGKKRRGRRSKKERRRGR) has biased composition (basic residues). The disordered stretch occupies residues 1975–2014 (KGKGKKRRGRRSKKERRRGRKEGEEDQNPPCPRLSRELLD). Positions 1976 to 1994 (GKGKKRRGRRSKKERRRGR) are enriched in basic residues. Positions 2219 to 2258 (KGKGKKRRGRRSKKERRRGRKEGEEDQNPPCPRLSRELLD) are disordered. Positions 2220–2238 (GKGKKRRGRRSKKERRRGR) are enriched in basic residues. A disordered region spans residues 2463-2502 (KGKGKKRRGRRSKKERRRGRKEGEEDQNPPCPRLSRELLD). Over residues 2464 to 2482 (GKGKKRRGRRSKKERRRGR) the composition is skewed to basic residues. 2 disordered regions span residues 2707–2745 (KGKGKKRRGRRSKKERRRGRKEGEEDQNPPCPRLSRELL) and 2877–2909 (GKGKKRRGRRSKKERRRGRKEGEEDQNPPCPRL). 2 stretches are compositionally biased toward basic residues: residues 2708 to 2726 (GKGKKRRGRRSKKERRRGR) and 2877 to 2895 (GKGKKRRGRRSKKERRRGR).

This sequence belongs to the NBPF family. Expressed in spleen and fetal liver.

Its subcellular location is the cytoplasm. The protein is NBPF family member NBPF14 of Homo sapiens (Human).